Here is a 664-residue protein sequence, read N- to C-terminus: Metal-nicotianamine transporter YSL2 (664 aa).

14 helical membrane-spanning segments follow: residues 31–51 (ITVR…VICL), 55–75 (LTTG…FVFL), 103–123 (CAVA…LLGL), 147–167 (GVGW…VVLV), 209–229 (GFIK…FYSG), 268–288 (LVNL…WPLI), 314–334 (FICI…ILFF), 378–398 (IPLW…IIAI), 409–429 (FVLV…YGAG), 457–477 (VVAG…SADL), 496–516 (VAQA…FFLF), 549–569 (SALP…AVAA), 594–614 (FLVG…VYVW), and 629–649 (VASG…LLAL).

It belongs to the YSL (TC 2.A.67.2) family. Expressed in roots, leaves and weakly in shoots. Restricted to the veins, to the central cylinder of the young roots and to the pericycle and the endodermis cells facing the meta-xylem tubes in older roots. Expressed in the vasculature of sepals, petals, anthers, stigma and siliques, but not in developing seeds or in meristematic zones.

The protein localises to the cell membrane. Its function is as follows. May be involved in the lateral transport of nicotianamine-chelated metals in the vasculature. The chain is Metal-nicotianamine transporter YSL2 (YSL2) from Arabidopsis thaliana (Mouse-ear cress).